A 715-amino-acid polypeptide reads, in one-letter code: Protein sneaky (715 aa).

The Cytoplasmic portion of the chain corresponds to 1-32 (MLSLLTRPFLPIFCFLYGPQSEGSTRIQCLRR). A helical transmembrane segment spans residues 33-53 (FVTFLLGLVLGFLLWKLAALN). Over 54-66 (FTLGRLFVNGATD) the chain is Extracellular. The helical transmembrane segment at 67–87 (LYVFIIFVLVTGTIFMLSLPV) threads the bilayer. Over 88 to 109 (RAVILLIFVALVGKSGRTYLRA) the chain is Cytoplasmic. The helical transmembrane segment at 110-130 (VAFAFIISGPIANLVENAGEV) threads the bilayer. Residues 131 to 373 (ARVFVCTTVL…FERQKRIFNK (243 aa)) are Extracellular-facing. Residues 374–394 (VMGILQKILCLFMLRMVYVSI) form a helical membrane-spanning segment. At 395 to 457 (NYYVKYLNDV…FSRTHHESTT (63 aa)) the chain is on the cytoplasmic side. A helical transmembrane segment spans residues 458 to 478 (VCFNLLQFLLELVTAGLFILI). The Extracellular segment spans residues 479 to 553 (DHLVVELLQI…NAHVLPKKMY (75 aa)). Residues 554–574 (YQLILLYLIIIVLIYQSTTFL) traverse the membrane as a helical segment. Residues 575 to 715 (RMRRVICSFF…VEVYTYRKEK (141 aa)) are Cytoplasmic-facing. Residues 655–691 (CMICRGLEDSTFTVCGNCGLPYCDDCAEDLNSVCFQC) form an RING-type; degenerate zinc finger.

Specifically expressed in testis.

The protein localises to the cytoplasmic vesicle. It is found in the secretory vesicle. The protein resides in the acrosome membrane. Its subcellular location is the cytoplasm. It localises to the cytoplasmic vesicle membrane. In terms of biological role, component of the sperm acrosome membrane. Required for breakdown of the sperm plasma membrane after sperm entry into the egg, which is an essential prerequisite for successful fertilization. The chain is Protein sneaky from Drosophila melanogaster (Fruit fly).